Here is a 155-residue protein sequence, read N- to C-terminus: Ribosome maturation factor RimP (155 aa).

The protein belongs to the RimP family.

It localises to the cytoplasm. Functionally, required for maturation of 30S ribosomal subunits. The protein is Ribosome maturation factor RimP of Staphylococcus carnosus (strain TM300).